A 623-amino-acid chain; its full sequence is Endoglucanase 12 (623 aa).

Over 1 to 73 the chain is Cytoplasmic; the sequence is MYSANHWGGS…LGCVVVKRKL (73 aa). The helical; Signal-anchor for type II membrane protein transmembrane segment at 74–94 threads the bilayer; that stretch reads LWWVLWTLLAAFILIGLPVII. Over 95 to 623 the chain is Extracellular; sequence AKSIPKKKPH…TPPPPSKWKP (529 aa). The active-site Nucleophile is Asp166. Residues Asn217, Asn236, Asn324, Asn345, Asn408, and Asn425 are each glycosylated (N-linked (GlcNAc...) asparagine). Active-site residues include His513, Asp561, and Glu570.

This sequence belongs to the glycosyl hydrolase 9 (cellulase E) family. Ubiquitous.

The protein resides in the membrane. It carries out the reaction Endohydrolysis of (1-&gt;4)-beta-D-glucosidic linkages in cellulose, lichenin and cereal beta-D-glucans.. This is Endoglucanase 12 (GLU3) from Oryza sativa subsp. japonica (Rice).